Reading from the N-terminus, the 275-residue chain is NLFSVIVSLIFLYIINKTLTLYLVCTLPILIIVILPIGNIMKRVSSKSQEATAKLSSYYSNRLSTIKLIKTLSTYNIEKIKNYTLLKNIFDIELHKIKVLSFFEPIMNLILFINIFGILFLGYYLMENNMMKSGDMFAYVLYLFQIINPIVSITSYWTEVQRAIGSSDRILKINKEPEEVLTIKTTYNNFVQKMEINDLNFTKDNKQIINSISLDLHKGYIYNIIGESGCGKSTLLNILAGLNTEYTGNIYLDKLDKSQFSKYEWRNLFSYITQD.

Positions 1–162 (NLFSVIVSLI…ITSYWTEVQR (162 aa)) constitute an ABC transmembrane type-1 domain. 3 consecutive transmembrane segments (helical) span residues 21–41 (LYLVCTLPILIIVILPIGNIM), 106–126 (IMNLILFINIFGILFLGYYLM), and 137–157 (FAYVLYLFQIINPIVSITSYW).

The protein localises to the cell membrane. This is an uncharacterized protein from Staphylococcus epidermidis.